The chain runs to 654 residues: Sphingosine kinase 2 (654 aa).

The span at 1-17 (MNGHLEAEEQQDQRPDQ) shows a compositional bias: basic and acidic residues. The tract at residues 1–28 (MNGHLEAEEQQDQRPDQELTGSWGHGPR) is disordered. The tract at residues 1–175 (MNGHLEAEEQ…LPGDGEITPD (175 aa)) is required for binding to sulfatide and phosphoinositides and for membrane localizatione. The Nuclear localization signal motif lies at 122–130 (RGRRGARRR). Positions 178-325 (PRPPRLLLLV…LDLLSVTLAS (148 aa)) constitute a DAGKc domain. ATP is bound by residues 188–190 (NPF) and 220–224 (TERQN). Substrate is bound at residue 245–248 (SGDG). Catalysis depends on Asp247, which acts as the Proton donor/acceptor. Residues Glu252 and 277-279 (GSG) each bind ATP. Asp344 is a substrate binding site. ATP is bound by residues Arg351 and Arg357. The residue at position 387 (Ser387) is a Phosphoserine; by MAPK. Phosphoserine occurs at positions 393 and 399. Residues 400 to 509 (ELTLTPDPAP…PLPTPDARVG (110 aa)) form a disordered region. Positions 416–425 (LHRSVSDLPL) match the Nuclear export signal motif. Ser419 and Ser421 each carry phosphoserine; by PKD. The segment covering 447 to 461 (NGGGPELAGDWGGAG) has biased composition (gly residues). Positions 462–482 (DAPLSPDPLLSSPPGSPKAAL) are enriched in low complexity. Ser477 is modified (phosphoserine). Thr614 carries the phosphothreonine; by MAPK modification. 622–624 (DGE) serves as a coordination point for ATP.

Interacts with histone H3. Interacts with HDAC1, HDAC2, MBD2 and SIN3A. Interacts with EEF1A1; the interaction enhances SPHK2 kinase activity. Interacts with PHB2. Mg(2+) serves as cofactor. Post-translationally, phosphorylated by PKD on Ser-419 and Ser-421 upon PMA treatment. Phosphorylation induces export from the nucleus to the cytoplasm. Phosphorylated by MAPK1 and MAPK2 at Ser-387 and Thr-614, phosphorylation is induced by agonists such as EGF and PMA and increases kinase activity. In terms of processing, cleaved by CASP1 in apoptotic cells. The truncated form is released from cells. Mainly expressed in adult kidney, liver, and brain. Expressed in cerebral cortex and hippocampus (at protein level). Isoform 1 is the predominant form expressed in most tissues.

The protein localises to the cytoplasm. Its subcellular location is the nucleus. The protein resides in the endoplasmic reticulum. It localises to the mitochondrion inner membrane. It is found in the lysosome membrane. The catalysed reaction is a sphingoid base + ATP = a sphingoid 1-phosphate + ADP + H(+). It carries out the reaction sphing-4-enine + ATP = sphing-4-enine 1-phosphate + ADP + H(+). It catalyses the reaction sphinganine + ATP = sphinganine 1-phosphate + ADP + H(+). The enzyme catalyses (4R)-hydroxysphinganine + ATP = (4R)-hydroxysphinganine 1-phosphate + ADP + H(+). Inhibited by sulfatide. Kinase activity is increased by phosphorylation by MAPK2 upon PMA or EGF treatments. Functionally, catalyzes the phosphorylation of sphingosine to form sphingosine-1-phosphate (SPP), a lipid mediator with both intra- and extracellular functions. Also acts on D-erythro-dihydrosphingosine, D-erythro-sphingosine and L-threo-dihydrosphingosine. Binds phosphoinositides. In contrast to prosurvival SPHK1, has a positive effect on intracellular ceramide levels, inhibits cells growth and enhances apoptosis. In mitochondria, is important for cytochrome-c oxidase assembly and mitochondrial respiration. The SPP produced in mitochondria binds PHB2 and modulates the regulation via PHB2 of complex IV assembly and respiration. In nucleus, plays a role in epigenetic regulation of gene expression. Interacts with HDAC1 and HDAC2 and, through SPP production, inhibits their enzymatic activity, preventing the removal of acetyl groups from lysine residues with histones. Up-regulates acetylation of histone H3-K9, histone H4-K5 and histone H2B-K12. In nucleus, may have an inhibitory effect on DNA synthesis and cell cycle. In mast cells, is the main regulator of SPP production which mediates calcium influx, NF-kappa-B activation, cytokine production, such as TNF and IL6, and degranulation of mast cells. In dopaminergic neurons, is involved in promoting mitochondrial functions regulating ATP and ROS levels. Also involved in the regulation of glucose and lipid metabolism. This chain is Sphingosine kinase 2, found in Homo sapiens (Human).